A 744-amino-acid chain; its full sequence is 1,4-alpha-glucan branching enzyme GlgB (744 aa).

D415 acts as the Nucleophile in catalysis. The active-site Proton donor is the E468.

This sequence belongs to the glycosyl hydrolase 13 family. GlgB subfamily. Monomer.

The enzyme catalyses Transfers a segment of a (1-&gt;4)-alpha-D-glucan chain to a primary hydroxy group in a similar glucan chain.. It functions in the pathway glycan biosynthesis; glycogen biosynthesis. Functionally, catalyzes the formation of the alpha-1,6-glucosidic linkages in glycogen by scission of a 1,4-alpha-linked oligosaccharide from growing alpha-1,4-glucan chains and the subsequent attachment of the oligosaccharide to the alpha-1,6 position. This is 1,4-alpha-glucan branching enzyme GlgB from Shewanella frigidimarina (strain NCIMB 400).